We begin with the raw amino-acid sequence, 423 residues long: MTPAQRKFLKIVKDEHYFDKDSKILLALSGGKDSMTLFNWLYDLKEVLGIELGLAHINHGLREESKFEEIALREMATKLKVPIYVDKFTGEFTEKNARDFRYQFFEKLMIGENYNILLTAHHQGDLVETVLMRQITGRPLRSLQGIADRQPFAGGQLIRPLLKFTKEELDAQTYYEDSTNQGLDYFRNRIRNQLIPELKKENPQFSQSISDLSSEIKKALAVINQKISELEIVDEKISSKKFISQTKELQHFILQAFFAQYPEIEVSKKKFAELLHIINRPQQYFAKLNKEFYFVKTKDFFYLEKIQLERENSVEIVSENPQDESFMEVYLPLEGEIEIRKRQPGDQILINGHHKKLRKFFIDNKVPLKARENPLIFVDKKLYAIVGLACSDLSKMLKNDKIRRILWVKPSIGEEINDARKKS.

29-34 (SGGKDS) provides a ligand contact to ATP.

Belongs to the tRNA(Ile)-lysidine synthase family.

The protein resides in the cytoplasm. It catalyses the reaction cytidine(34) in tRNA(Ile2) + L-lysine + ATP = lysidine(34) in tRNA(Ile2) + AMP + diphosphate + H(+). Ligates lysine onto the cytidine present at position 34 of the AUA codon-specific tRNA(Ile) that contains the anticodon CAU, in an ATP-dependent manner. Cytidine is converted to lysidine, thus changing the amino acid specificity of the tRNA from methionine to isoleucine. This Lactococcus lactis subsp. lactis (strain IL1403) (Streptococcus lactis) protein is tRNA(Ile)-lysidine synthase.